The chain runs to 308 residues: GMP synthase [glutamine-hydrolyzing] subunit B (308 aa).

One can recognise a GMPS ATP-PPase domain in the interval 2–183 (LNPSDFIEEA…LGLPREMIQR (182 aa)). 29–35 (SGGVDSS) provides a ligand contact to ATP.

As to quaternary structure, heterodimer composed of a glutamine amidotransferase subunit (A) and a GMP-binding subunit (B).

It catalyses the reaction XMP + L-glutamine + ATP + H2O = GMP + L-glutamate + AMP + diphosphate + 2 H(+). The protein operates within purine metabolism; GMP biosynthesis; GMP from XMP (L-Gln route): step 1/1. Catalyzes the synthesis of GMP from XMP. In Methanothermobacter thermautotrophicus (strain ATCC 29096 / DSM 1053 / JCM 10044 / NBRC 100330 / Delta H) (Methanobacterium thermoautotrophicum), this protein is GMP synthase [glutamine-hydrolyzing] subunit B (guaAB).